The following is a 660-amino-acid chain: Bifunctional polymyxin resistance protein ArnA (660 aa).

The tract at residues 1 to 304 is formyltransferase ArnAFT; it reads MKTVVFAYHD…TLGLVQGSRL (304 aa). A (6R)-10-formyltetrahydrofolate-binding site is contributed by 86–88; that stretch reads HLI. The Proton donor; for formyltransferase activity role is filled by His104. (6R)-10-formyltetrahydrofolate-binding positions include Arg114 and 136-140; that span reads VKRAD. The interval 314-660 is dehydrogenase ArnADH; that stretch reads RRTRVLILGV…RTVDLTDKPS (347 aa). Residues Asp347 and 368–369 contribute to the NAD(+) site; that span reads DI. UDP-alpha-D-glucuronate-binding positions include Ala393, Tyr398, and 432–433; that span reads TS. The Proton acceptor; for decarboxylase activity role is filled by Glu434. UDP-alpha-D-glucuronate is bound by residues Arg460, Asn492, 526-535, and Tyr613; that span reads KLIDGGKQKR. The Proton donor; for decarboxylase activity role is filled by Arg619.

In the N-terminal section; belongs to the Fmt family. UDP-L-Ara4N formyltransferase subfamily. It in the C-terminal section; belongs to the NAD(P)-dependent epimerase/dehydratase family. UDP-glucuronic acid decarboxylase subfamily. In terms of assembly, homohexamer, formed by a dimer of trimers.

The catalysed reaction is UDP-alpha-D-glucuronate + NAD(+) = UDP-beta-L-threo-pentopyranos-4-ulose + CO2 + NADH. It carries out the reaction UDP-4-amino-4-deoxy-beta-L-arabinose + (6R)-10-formyltetrahydrofolate = UDP-4-deoxy-4-formamido-beta-L-arabinose + (6S)-5,6,7,8-tetrahydrofolate + H(+). It functions in the pathway nucleotide-sugar biosynthesis; UDP-4-deoxy-4-formamido-beta-L-arabinose biosynthesis; UDP-4-deoxy-4-formamido-beta-L-arabinose from UDP-alpha-D-glucuronate: step 1/3. Its pathway is nucleotide-sugar biosynthesis; UDP-4-deoxy-4-formamido-beta-L-arabinose biosynthesis; UDP-4-deoxy-4-formamido-beta-L-arabinose from UDP-alpha-D-glucuronate: step 3/3. It participates in bacterial outer membrane biogenesis; lipopolysaccharide biosynthesis. Functionally, bifunctional enzyme that catalyzes the oxidative decarboxylation of UDP-glucuronic acid (UDP-GlcUA) to UDP-4-keto-arabinose (UDP-Ara4O) and the addition of a formyl group to UDP-4-amino-4-deoxy-L-arabinose (UDP-L-Ara4N) to form UDP-L-4-formamido-arabinose (UDP-L-Ara4FN). The modified arabinose is attached to lipid A and is required for resistance to polymyxin and cationic antimicrobial peptides. The sequence is that of Bifunctional polymyxin resistance protein ArnA from Escherichia coli O17:K52:H18 (strain UMN026 / ExPEC).